The chain runs to 209 residues: Protease (209 aa).

Active-site residues include His55, Asp72, and Cys123.

Belongs to the peptidase C5 family. As to quaternary structure, interacts with protease cofactor pVI-C; this interaction is necessary for protease activation.

The protein resides in the virion. It is found in the host nucleus. It catalyses the reaction Cleaves proteins of the adenovirus and its host cell at two consensus sites: -Yaa-Xaa-Gly-Gly-|-Xaa- and -Yaa-Xaa-Gly-Xaa-|-Gly- (in which Yaa is Met, Ile or Leu, and Xaa is any amino acid).. Requires DNA and protease cofactor for maximal activation. Inside nascent virions, becomes partially activated by binding to the viral DNA, allowing it to cleave the cofactor that binds to the protease and fully activates it. Actin, like the viral protease cofactor, seems to act as a cofactor in the cleavage of cytokeratin 18 and of actin itself. Its function is as follows. Cleaves viral precursor proteins (pTP, pIIIa, pVI, pVII, pVIII, and pX) inside newly assembled particles giving rise to mature virions. Protease complexed to its cofactor slides along the viral DNA to specifically locate and cleave the viral precursors. Mature virions have a weakened organization compared to the unmature virions, thereby facilitating subsequent uncoating. Without maturation, the particle lacks infectivity and is unable to uncoat. Late in adenovirus infection, in the cytoplasm, may participate in the cytoskeleton destruction. Cleaves host cell cytoskeletal keratins K7 and K18. This is Protease from Human adenovirus D serotype 17 (HAdV-17).